Consider the following 334-residue polypeptide: Ornithine carbamoyltransferase (334 aa).

Carbamoyl phosphate-binding positions include 57 to 60 (STRT), arginine 108, and 135 to 138 (HPTQ). Residues asparagine 168, aspartate 232, and 236 to 237 (SM) contribute to the L-ornithine site. Carbamoyl phosphate contacts are provided by residues 274–275 (CL) and arginine 321.

Belongs to the aspartate/ornithine carbamoyltransferase superfamily. OTCase family.

It is found in the cytoplasm. It catalyses the reaction carbamoyl phosphate + L-ornithine = L-citrulline + phosphate + H(+). It participates in amino-acid biosynthesis; L-arginine biosynthesis; L-arginine from L-ornithine and carbamoyl phosphate: step 1/3. Its function is as follows. Reversibly catalyzes the transfer of the carbamoyl group from carbamoyl phosphate (CP) to the N(epsilon) atom of ornithine (ORN) to produce L-citrulline. The polypeptide is Ornithine carbamoyltransferase (Cutibacterium acnes (strain DSM 16379 / KPA171202) (Propionibacterium acnes)).